Here is a 643-residue protein sequence, read N- to C-terminus: Clathrin interactor 1 (643 aa).

An ENTH domain is found at Asn-16 to Arg-149. An a 1,2-diacyl-sn-glycero-3-phospho-(1D-myo-inositol-4,5-bisphosphate)-binding site is contributed by Arg-29. The segment at Phe-52 to Tyr-54 is interaction with VTI1B. Arg-67 provides a ligand contact to a 1,2-diacyl-sn-glycero-3-phospho-(1D-myo-inositol-4,5-bisphosphate). Interaction with VTI1B stretches follow at residues Ser-94–Arg-96 and Asp-142–Lys-153. Phosphoserine occurs at positions 163, 166, 173, 205, 210, 227, 245, and 299. A disordered region spans residues Phe-219 to Asp-331. Over residues Lys-222–Lys-239 the composition is skewed to basic and acidic residues. The span at Pro-300–Gln-310 shows a compositional bias: polar residues. Thr-308 bears the Phosphothreonine mark. A compositionally biased stretch (low complexity) spans Ser-311 to Ser-323. Phosphoserine is present on residues Ser-312 and Ser-642.

This sequence belongs to the epsin family. Binds clathrin heavy chain and AP-2. Interacts with VTI1B. Interacts with GGA2 (via GAE domain). Interacts with AP1G1 (via GAE domain). Interacts with AP1G2 (via GAE domain).

The protein localises to the cytoplasm. Its subcellular location is the perinuclear region. The protein resides in the membrane. It is found in the cytoplasmic vesicle. It localises to the clathrin-coated vesicle. Binds to membranes enriched in phosphatidylinositol 4,5-bisphosphate (PtdIns(4,5)P2). May have a role in transport via clathrin-coated vesicles from the trans-Golgi network to endosomes. Stimulates clathrin assembly. The chain is Clathrin interactor 1 (CLINT1) from Bos taurus (Bovine).